Consider the following 142-residue polypeptide: Large ribosomal subunit protein uL13 (142 aa).

Belongs to the universal ribosomal protein uL13 family. Part of the 50S ribosomal subunit.

Functionally, this protein is one of the early assembly proteins of the 50S ribosomal subunit, although it is not seen to bind rRNA by itself. It is important during the early stages of 50S assembly. The sequence is that of Large ribosomal subunit protein uL13 from Cupriavidus necator (strain ATCC 17699 / DSM 428 / KCTC 22496 / NCIMB 10442 / H16 / Stanier 337) (Ralstonia eutropha).